We begin with the raw amino-acid sequence, 433 residues long: 3-phosphoshikimate 1-carboxyvinyltransferase (433 aa).

Lysine 23, serine 24, and arginine 28 together coordinate 3-phosphoshikimate. Lysine 23 serves as a coordination point for phosphoenolpyruvate. 2 residues coordinate phosphoenolpyruvate: glycine 95 and arginine 123. Residues serine 170, serine 171, glutamine 172, serine 198, aspartate 317, and lysine 344 each coordinate 3-phosphoshikimate. Glutamine 172 is a phosphoenolpyruvate binding site. Residue aspartate 317 is the Proton acceptor of the active site. Arginine 348, arginine 391, and lysine 416 together coordinate phosphoenolpyruvate.

The protein belongs to the EPSP synthase family. Monomer.

The protein localises to the cytoplasm. It catalyses the reaction 3-phosphoshikimate + phosphoenolpyruvate = 5-O-(1-carboxyvinyl)-3-phosphoshikimate + phosphate. It functions in the pathway metabolic intermediate biosynthesis; chorismate biosynthesis; chorismate from D-erythrose 4-phosphate and phosphoenolpyruvate: step 6/7. In terms of biological role, catalyzes the transfer of the enolpyruvyl moiety of phosphoenolpyruvate (PEP) to the 5-hydroxyl of shikimate-3-phosphate (S3P) to produce enolpyruvyl shikimate-3-phosphate and inorganic phosphate. The polypeptide is 3-phosphoshikimate 1-carboxyvinyltransferase (Neisseria meningitidis serogroup C / serotype 2a (strain ATCC 700532 / DSM 15464 / FAM18)).